A 225-amino-acid polypeptide reads, in one-letter code: Phosphoserine phosphatase (225 aa).

At methionine 1 the chain carries N-acetylmethionine. The active-site Nucleophile is aspartate 20. Mg(2+)-binding residues include aspartate 20 and aspartate 22. L-serine is bound at residue 20–22; that stretch reads DVD. The active-site Proton donor is aspartate 22. Methionine 52 lines the O-phospho-L-serine pocket. Position 53 (glycine 53) interacts with phosphate. L-serine-binding positions include 109–111 and lysine 158; that span reads SGG. Residues 109–111 and lysine 158 each bind O-phospho-L-serine; that span reads SGG. Aspartate 179 lines the Mg(2+) pocket. Position 182 (threonine 182) interacts with O-phospho-L-serine. Residue threonine 182 coordinates phosphate.

The protein belongs to the HAD-like hydrolase superfamily. SerB family. In terms of assembly, homodimer. Requires Mg(2+) as cofactor.

The protein localises to the cytoplasm. It is found in the cytosol. It carries out the reaction O-phospho-L-serine + H2O = L-serine + phosphate. The catalysed reaction is O-phospho-D-serine + H2O = D-serine + phosphate. It functions in the pathway amino-acid biosynthesis; L-serine biosynthesis; L-serine from 3-phospho-D-glycerate: step 3/3. In terms of biological role, catalyzes the last irreversible step in the biosynthesis of L-serine from carbohydrates, the dephosphorylation of O-phospho-L-serine to L-serine. L-serine can then be used in protein synthesis, to produce other amino acids, in nucleotide metabolism or in glutathione synthesis, or can be racemized to D-serine, a neuromodulator. May also act on O-phospho-D-serine. The chain is Phosphoserine phosphatase from Bos taurus (Bovine).